A 179-amino-acid chain; its full sequence is UPF0302 protein YpiB (179 aa).

The protein belongs to the UPF0302 family.

The protein is UPF0302 protein YpiB (ypiB) of Bacillus subtilis (strain 168).